A 729-amino-acid chain; its full sequence is Fatty acid oxidation complex subunit alpha (729 aa).

Residues 1–189 (MLYKGDTLYL…KIGLVDGVVK (189 aa)) form an enoyl-CoA hydratase/isomerase region. Asp-296 is a substrate binding site. A 3-hydroxyacyl-CoA dehydrogenase region spans residues 311–729 (ETPKQAAVLG…ARPVGSLKTA (419 aa)). NAD(+) contacts are provided by residues Met-324, Asp-343, 400-402 (VVE), Lys-407, and Ser-429. His-450 acts as the For 3-hydroxyacyl-CoA dehydrogenase activity in catalysis. Residue Asn-453 coordinates NAD(+). Substrate contacts are provided by Asn-500 and Tyr-660. The segment at 708–729 (RHNEPYYPPVEPARPVGSLKTA) is disordered.

It in the N-terminal section; belongs to the enoyl-CoA hydratase/isomerase family. The protein in the C-terminal section; belongs to the 3-hydroxyacyl-CoA dehydrogenase family. As to quaternary structure, heterotetramer of two alpha chains (FadB) and two beta chains (FadA).

It carries out the reaction a (3S)-3-hydroxyacyl-CoA + NAD(+) = a 3-oxoacyl-CoA + NADH + H(+). It catalyses the reaction a (3S)-3-hydroxyacyl-CoA = a (2E)-enoyl-CoA + H2O. The catalysed reaction is a 4-saturated-(3S)-3-hydroxyacyl-CoA = a (3E)-enoyl-CoA + H2O. The enzyme catalyses (3S)-3-hydroxybutanoyl-CoA = (3R)-3-hydroxybutanoyl-CoA. It carries out the reaction a (3Z)-enoyl-CoA = a 4-saturated (2E)-enoyl-CoA. It catalyses the reaction a (3E)-enoyl-CoA = a 4-saturated (2E)-enoyl-CoA. Its pathway is lipid metabolism; fatty acid beta-oxidation. Functionally, involved in the aerobic and anaerobic degradation of long-chain fatty acids via beta-oxidation cycle. Catalyzes the formation of 3-oxoacyl-CoA from enoyl-CoA via L-3-hydroxyacyl-CoA. It can also use D-3-hydroxyacyl-CoA and cis-3-enoyl-CoA as substrate. The chain is Fatty acid oxidation complex subunit alpha from Salmonella schwarzengrund (strain CVM19633).